The sequence spans 461 residues: Cysteine--tRNA ligase (461 aa).

Residue C29 participates in Zn(2+) binding. Residues 31-41 (MTVYDLCHLGH) carry the 'HIGH' region motif. The Zn(2+) site is built by C213, H238, and E242. The 'KMSKS' region signature appears at 270–274 (KMSKS). K273 contributes to the ATP binding site.

Belongs to the class-I aminoacyl-tRNA synthetase family. In terms of assembly, monomer. The cofactor is Zn(2+).

The protein localises to the cytoplasm. It catalyses the reaction tRNA(Cys) + L-cysteine + ATP = L-cysteinyl-tRNA(Cys) + AMP + diphosphate. The sequence is that of Cysteine--tRNA ligase from Delftia acidovorans (strain DSM 14801 / SPH-1).